Reading from the N-terminus, the 421-residue chain is Enolase (421 aa).

Position 165 (glutamine 165) interacts with (2R)-2-phosphoglycerate. Glutamate 207 (proton donor) is an active-site residue. Mg(2+) contacts are provided by aspartate 244, glutamate 285, and aspartate 312. Residues lysine 337, arginine 366, serine 367, and lysine 388 each coordinate (2R)-2-phosphoglycerate. The Proton acceptor role is filled by lysine 337.

This sequence belongs to the enolase family. Requires Mg(2+) as cofactor.

The protein localises to the cytoplasm. It localises to the secreted. Its subcellular location is the cell surface. The enzyme catalyses (2R)-2-phosphoglycerate = phosphoenolpyruvate + H2O. It functions in the pathway carbohydrate degradation; glycolysis; pyruvate from D-glyceraldehyde 3-phosphate: step 4/5. In terms of biological role, catalyzes the reversible conversion of 2-phosphoglycerate (2-PG) into phosphoenolpyruvate (PEP). It is essential for the degradation of carbohydrates via glycolysis. This chain is Enolase, found in Ehrlichia ruminantium (strain Welgevonden).